Here is a 221-residue protein sequence, read N- to C-terminus: MCPLRSLLLISTLVLLHHLPHLSLGRSLPITTAGPGRSCLDYSQNLLRAVSNTLQKARQTLEFYSCTSEEIDHEDITKDKTSTVEACLPLELATNESCLASRETSLITNGHCLASGKTSFMTTLCLRSIYKDLKMYHMEFQAINAKLLMDPKRQVSLDQNMLAAIAELMQALNFDSETVPQKPSLEELDFYKTKVKLCILLHAFRIRAVTIDRMMSYLSSS.

Positions 1 to 25 are cleaved as a signal peptide; it reads MCPLRSLLLISTLVLLHHLPHLSLG. Cystine bridges form between cysteine 39/cysteine 112, cysteine 66/cysteine 198, and cysteine 87/cysteine 125. N-linked (GlcNAc...) asparagine glycosylation is present at asparagine 95.

It belongs to the IL-6 superfamily. In terms of assembly, heterodimer with IL12B; disulfide-linked. This heterodimer is known as interleukin IL-12. Heterodimer with EBI3/IL27B; not disulfide-linked. This heterodimer is known as interleukin IL-35. Interacts with NBR1; this interaction promotes IL-12 secretion.

The protein resides in the secreted. Its function is as follows. Heterodimerizes with IL12B to form the IL-12 cytokine or with EBI3/IL27B to form the IL-35 cytokine. IL-12 is primarily produced by professional antigen-presenting cells (APCs) such as B-cells and dendritic cells (DCs) as well as macrophages and granulocytes and regulates T-cell and natural killer-cell responses, induces the production of interferon-gamma (IFN-gamma), favors the differentiation of T-helper 1 (Th1) cells and is an important link between innate resistance and adaptive immunity. Mechanistically, exerts its biological effects through a receptor composed of IL12R1 and IL12R2 subunits. Binding to the receptor results in the rapid tyrosine phosphorylation of a number of cellular substrates including the JAK family kinases TYK2 and JAK2. In turn, recruited STAT4 gets phosphorylated and translocates to the nucleus where it regulates cytokine/growth factor responsive genes. As part of IL-35, plays essential roles in maintaining the immune homeostasis of the liver microenvironment and also functions as an immune-suppressive cytokine. Mediates biological events through unconventional receptors composed of IL12RB2 and gp130/IL6ST heterodimers or homodimers. Signaling requires the transcription factors STAT1 and STAT4, which form a unique heterodimer that binds to distinct DNA sites. This chain is Interleukin-12 subunit alpha (IL12A), found in Capra hircus (Goat).